The primary structure comprises 166 residues: Cyclic pyranopterin monophosphate synthase (166 aa).

Substrate-binding positions include 83-85 (LCH) and 121-122 (ME). Aspartate 136 is a catalytic residue.

It belongs to the MoaC family. In terms of assembly, homohexamer; trimer of dimers.

The catalysed reaction is (8S)-3',8-cyclo-7,8-dihydroguanosine 5'-triphosphate = cyclic pyranopterin phosphate + diphosphate. It participates in cofactor biosynthesis; molybdopterin biosynthesis. In terms of biological role, catalyzes the conversion of (8S)-3',8-cyclo-7,8-dihydroguanosine 5'-triphosphate to cyclic pyranopterin monophosphate (cPMP). The protein is Cyclic pyranopterin monophosphate synthase of Syntrophobacter fumaroxidans (strain DSM 10017 / MPOB).